A 422-amino-acid chain; its full sequence is Beta-1,3-galactosyltransferase 2 (422 aa).

Residues 1–24 lie on the Cytoplasmic side of the membrane; it reads MLQWRRRHCCFAKMTWNAKRSLFR. The chain crosses the membrane as a helical; Signal-anchor for type II membrane protein span at residues 25 to 45; it reads THLIGVLSLVFLFAMFLFFNH. Residues 46-422 are Lumenal-facing; that stretch reads HDWLPGRAGF…AGRYRHRKLH (377 aa). N-linked (GlcNAc...) asparagine glycosylation is found at Asn-75, Asn-100, Asn-119, Asn-176, and Asn-226. The segment at 90 to 110 is disordered; the sequence is TLRPQTATNSNNTDLSPQGVT.

It belongs to the glycosyltransferase 31 family. Mn(2+) serves as cofactor.

The protein localises to the golgi apparatus membrane. The catalysed reaction is an N-acetyl-beta-D-glucosaminyl derivative + UDP-alpha-D-galactose = a beta-D-galactosyl-(1-&gt;3)-N-acetyl-beta-D-glucosaminyl derivative + UDP + H(+). It catalyses the reaction a beta-D-GlcNAc-(1-&gt;3)-beta-D-Gal-(1-&gt;4)-beta-D-Glc-(1&lt;-&gt;1)-Cer(d18:1(4E)) + UDP-alpha-D-galactose = a beta-D-Gal-(1-&gt;3)-beta-D-GlcNAc-(1-&gt;3)-beta-D-Gal-(1-&gt;4)-beta-D-Glc-(1&lt;-&gt;1')-Cer(d18:1(4E)) + UDP + H(+). The enzyme catalyses a neolactoside IV(3)-beta-GlcNAc-nLc4Cer(d18:1(4E)) + UDP-alpha-D-galactose = a neolactoside IV(3)-beta-[Gal-beta-(1-&gt;3)-GlcNAc]-nLc4Cer(d18:1(4E)) + UDP + H(+). Its pathway is protein modification; protein glycosylation. In terms of biological role, beta-1,3-galactosyltransferase that transfers galactose from UDP-galactose to substrates with a terminal beta-N-acetylglucosamine (beta-GlcNAc) residue. Can also utilize substrates with a terminal galactose residue, albeit with lower efficiency. Involved in the biosynthesis of the carbohydrate moieties of glycolipids and glycoproteins. Inactive towards substrates with terminal alpha-N-acetylglucosamine (alpha-GlcNAc) or alpha-N-acetylgalactosamine (alpha-GalNAc) residues. The protein is Beta-1,3-galactosyltransferase 2 (B3GALT2) of Pongo abelii (Sumatran orangutan).